The following is a 395-amino-acid chain: Ribonuclease D (395 aa).

One can recognise a 3'-5' exonuclease domain in the interval 14 to 181 (LITKSEDLAA…VYETLRDRLE (168 aa)). The HRDC domain occupies 219–300 (NRRYLGLLRA…AEARGLPDAD (82 aa)).

The protein belongs to the RNase D family. A divalent metal cation is required as a cofactor.

It localises to the cytoplasm. The enzyme catalyses Exonucleolytic cleavage that removes extra residues from the 3'-terminus of tRNA to produce 5'-mononucleotides.. Exonuclease involved in the 3' processing of various precursor tRNAs. Initiates hydrolysis at the 3'-terminus of an RNA molecule and releases 5'-mononucleotides. The protein is Ribonuclease D of Granulibacter bethesdensis (strain ATCC BAA-1260 / CGDNIH1).